Here is a 262-residue protein sequence, read N- to C-terminus: Tryptophan synthase alpha chain (262 aa).

Residues Glu-49 and Asp-60 each act as proton acceptor in the active site.

Belongs to the TrpA family. In terms of assembly, tetramer of two alpha and two beta chains.

It carries out the reaction (1S,2R)-1-C-(indol-3-yl)glycerol 3-phosphate + L-serine = D-glyceraldehyde 3-phosphate + L-tryptophan + H2O. It functions in the pathway amino-acid biosynthesis; L-tryptophan biosynthesis; L-tryptophan from chorismate: step 5/5. In terms of biological role, the alpha subunit is responsible for the aldol cleavage of indoleglycerol phosphate to indole and glyceraldehyde 3-phosphate. The protein is Tryptophan synthase alpha chain of Aquifex aeolicus (strain VF5).